Consider the following 101-residue polypeptide: Aspartyl/glutamyl-tRNA(Asn/Gln) amidotransferase subunit C (101 aa).

The protein belongs to the GatC family. Heterotrimer of A, B and C subunits.

It carries out the reaction L-glutamyl-tRNA(Gln) + L-glutamine + ATP + H2O = L-glutaminyl-tRNA(Gln) + L-glutamate + ADP + phosphate + H(+). The catalysed reaction is L-aspartyl-tRNA(Asn) + L-glutamine + ATP + H2O = L-asparaginyl-tRNA(Asn) + L-glutamate + ADP + phosphate + 2 H(+). Functionally, allows the formation of correctly charged Asn-tRNA(Asn) or Gln-tRNA(Gln) through the transamidation of misacylated Asp-tRNA(Asn) or Glu-tRNA(Gln) in organisms which lack either or both of asparaginyl-tRNA or glutaminyl-tRNA synthetases. The reaction takes place in the presence of glutamine and ATP through an activated phospho-Asp-tRNA(Asn) or phospho-Glu-tRNA(Gln). The protein is Aspartyl/glutamyl-tRNA(Asn/Gln) amidotransferase subunit C of Lactococcus lactis subsp. cremoris (strain MG1363).